The primary structure comprises 1199 residues: DNA-directed RNA polymerase subunit beta' (1199 aa).

Residues C60, C62, C75, and C78 each contribute to the Zn(2+) site. 3 residues coordinate Mg(2+): D449, D451, and D453. C818, C892, C899, and C902 together coordinate Zn(2+).

Belongs to the RNA polymerase beta' chain family. As to quaternary structure, the RNAP catalytic core consists of 2 alpha, 1 beta, 1 beta' and 1 omega subunit. When a sigma factor is associated with the core the holoenzyme is formed, which can initiate transcription. Requires Mg(2+) as cofactor. Zn(2+) is required as a cofactor.

It carries out the reaction RNA(n) + a ribonucleoside 5'-triphosphate = RNA(n+1) + diphosphate. Functionally, DNA-dependent RNA polymerase catalyzes the transcription of DNA into RNA using the four ribonucleoside triphosphates as substrates. This is DNA-directed RNA polymerase subunit beta' from Exiguobacterium sibiricum (strain DSM 17290 / CCUG 55495 / CIP 109462 / JCM 13490 / 255-15).